Consider the following 431-residue polypeptide: Na(+)-translocating NADH-quinone reductase subunit F (431 aa).

Residues 10–30 (IFVASAAFCSLGLILVAVILL) traverse the membrane as a helical segment. The region spanning 41-133 (CKLKINNDDS…DLCLEVEERY (93 aa)) is the 2Fe-2S ferredoxin-type domain. 4 residues coordinate [2Fe-2S] cluster: C76, C82, C85, and C117. The 151-residue stretch at 136–286 (ASSWEGTVVS…SGPYGESFMK (151 aa)) folds into the FAD-binding FR-type domain.

Belongs to the NqrF family. In terms of assembly, composed of six subunits; NqrA, NqrB, NqrC, NqrD, NqrE and NqrF. Requires [2Fe-2S] cluster as cofactor. It depends on FAD as a cofactor.

Its subcellular location is the cell inner membrane. The enzyme catalyses a ubiquinone + n Na(+)(in) + NADH + H(+) = a ubiquinol + n Na(+)(out) + NAD(+). In terms of biological role, NQR complex catalyzes the reduction of ubiquinone-1 to ubiquinol by two successive reactions, coupled with the transport of Na(+) ions from the cytoplasm to the periplasm. The first step is catalyzed by NqrF, which accepts electrons from NADH and reduces ubiquinone-1 to ubisemiquinone by a one-electron transfer pathway. The protein is Na(+)-translocating NADH-quinone reductase subunit F of Chlamydia trachomatis serovar A (strain ATCC VR-571B / DSM 19440 / HAR-13).